A 72-amino-acid polypeptide reads, in one-letter code: uncharacterized protein (72 aa).

Belongs to the baculoviridae 8 kDa protein family.

This is an uncharacterized protein from Orgyia pseudotsugata (Douglas-fir tussock moth).